An 83-amino-acid chain; its full sequence is NAD(P)H-quinone oxidoreductase subunit L (83 aa).

The next 2 helical transmembrane spans lie at 18 to 38 (ILAY…ALFF) and 53 to 73 (LLVY…APFL).

This sequence belongs to the complex I NdhL subunit family. In terms of assembly, NDH-1 can be composed of about 15 different subunits; different subcomplexes with different compositions have been identified which probably have different functions.

Its subcellular location is the cellular thylakoid membrane. It carries out the reaction a plastoquinone + NADH + (n+1) H(+)(in) = a plastoquinol + NAD(+) + n H(+)(out). It catalyses the reaction a plastoquinone + NADPH + (n+1) H(+)(in) = a plastoquinol + NADP(+) + n H(+)(out). In terms of biological role, NDH-1 shuttles electrons from an unknown electron donor, via FMN and iron-sulfur (Fe-S) centers, to quinones in the respiratory and/or the photosynthetic chain. The immediate electron acceptor for the enzyme in this species is believed to be plastoquinone. Couples the redox reaction to proton translocation, and thus conserves the redox energy in a proton gradient. Cyanobacterial NDH-1 also plays a role in inorganic carbon-concentration. The sequence is that of NAD(P)H-quinone oxidoreductase subunit L from Parasynechococcus marenigrum (strain WH8102).